A 288-amino-acid polypeptide reads, in one-letter code: Long chain fatty acid elongase 1 (288 aa).

The next 7 helical transmembrane spans lie at 39–59 (FFADHFDVTIQASILYMVVVF), 73–93 (LTIPLNIWNFILAAFSIAGAV), 126–146 (WVWLFMASKLFELVDTIFLVL), 150–170 (PLMFLHWYHHILTMIYAWYSH), 180–197 (GIYLNFVVHAFMYSYYFL), 217–237 (IVQFIISCAVLAHLGYLMHFT), and 247–267 (VFKLAVFMDTTYLALFVNFFL).

It belongs to the ELO family.

It is found in the membrane. The catalysed reaction is (6Z,9Z,12Z)-octadecatrienoyl-CoA + malonyl-CoA + H(+) = (8Z,11Z,14Z)-3-oxoeicosatrienoyl-CoA + CO2 + CoA. The enzyme catalyses (6Z,9Z,12Z,15Z)-octadecatetraenoyl-CoA + malonyl-CoA + H(+) = (8Z,11Z,14Z,17Z)-3-oxoicosatetraenoyl-CoA + CO2 + CoA. It catalyses the reaction (9Z)-hexadecenoyl-CoA + malonyl-CoA + H(+) = 3-oxo-(11Z)-octadecenoyl-CoA + CO2 + CoA. The protein operates within lipid metabolism; fatty acid biosynthesis. Functionally, catalyzes the first and rate-limiting reaction of the four reactions that constitute the long-chain fatty acids elongation cycle. Uses malonyl-CoA to add 2 carbons per cycle to the chain of long-chain fatty acids. Condensing enzyme that catalyzes the elongation of monounsaturated (MUFA) and polyunsaturated (PUFA) fatty acids that are involved in multiple biological processes as precursors of membrane lipids and lipid mediators. The protein is Long chain fatty acid elongase 1 of Caenorhabditis elegans.